Reading from the N-terminus, the 125-residue chain is Holo-[acyl-carrier-protein] synthase (125 aa).

Positions 8 and 57 each coordinate Mg(2+).

Belongs to the P-Pant transferase superfamily. AcpS family. Requires Mg(2+) as cofactor.

Its subcellular location is the cytoplasm. The enzyme catalyses apo-[ACP] + CoA = holo-[ACP] + adenosine 3',5'-bisphosphate + H(+). In terms of biological role, transfers the 4'-phosphopantetheine moiety from coenzyme A to a Ser of acyl-carrier-protein. In Geotalea daltonii (strain DSM 22248 / JCM 15807 / FRC-32) (Geobacter daltonii), this protein is Holo-[acyl-carrier-protein] synthase.